We begin with the raw amino-acid sequence, 449 residues long: UDP-N-acetylmuramate--L-alanine ligase (449 aa).

Residue 113-119 (GSHGKTT) coordinates ATP.

The protein belongs to the MurCDEF family.

Its subcellular location is the cytoplasm. The enzyme catalyses UDP-N-acetyl-alpha-D-muramate + L-alanine + ATP = UDP-N-acetyl-alpha-D-muramoyl-L-alanine + ADP + phosphate + H(+). It participates in cell wall biogenesis; peptidoglycan biosynthesis. Cell wall formation. The protein is UDP-N-acetylmuramate--L-alanine ligase of Hydrogenobaculum sp. (strain Y04AAS1).